Consider the following 341-residue polypeptide: Glycerol-3-phosphate dehydrogenase [NAD(P)+] (341 aa).

Residues Ser-14, Phe-15, Arg-35, and Lys-108 each coordinate NADPH. The sn-glycerol 3-phosphate site is built by Lys-108 and Gly-136. Residue Ala-140 participates in NADPH binding. Residues Lys-191, Asp-244, Ser-254, Arg-255, and Asn-256 each coordinate sn-glycerol 3-phosphate. The active-site Proton acceptor is Lys-191. Arg-255 serves as a coordination point for NADPH. 2 residues coordinate NADPH: Val-279 and Glu-281.

The protein belongs to the NAD-dependent glycerol-3-phosphate dehydrogenase family.

It is found in the cytoplasm. The enzyme catalyses sn-glycerol 3-phosphate + NAD(+) = dihydroxyacetone phosphate + NADH + H(+). The catalysed reaction is sn-glycerol 3-phosphate + NADP(+) = dihydroxyacetone phosphate + NADPH + H(+). The protein operates within membrane lipid metabolism; glycerophospholipid metabolism. In terms of biological role, catalyzes the reduction of the glycolytic intermediate dihydroxyacetone phosphate (DHAP) to sn-glycerol 3-phosphate (G3P), the key precursor for phospholipid synthesis. This Pseudomonas syringae pv. syringae (strain B728a) protein is Glycerol-3-phosphate dehydrogenase [NAD(P)+].